A 263-amino-acid chain; its full sequence is MSGFAAKRRPIAKYRNGRFVEEEDEIALEFPLTITVNGEEFATIVCTPAHLDELVIGFLASEGAIRTCSDIKGMTIDGERGFAYVELAAGGLPAKQFYAKRFIGSCCGKSRQFYFYNDMKTAKTIVGGITVKADDCIRLMKALHERSTDFAATGGLHNAALATPDEMVVIRSDIGRHNALDKLYGYCLRHQVAMKDKLIVFSGRVSSEVLLKAAKMGVSVLLSKSAPTTLALDLADELGITVVGFLRGQAFNVYTHESRIIIG.

Catalysis depends on C107, which acts as the Cysteine persulfide intermediate.

It belongs to the FdhD family.

It localises to the cytoplasm. Required for formate dehydrogenase (FDH) activity. Acts as a sulfur carrier protein that transfers sulfur from IscS to the molybdenum cofactor prior to its insertion into FDH. This Geobacillus kaustophilus (strain HTA426) protein is Sulfur carrier protein FdhD.